The sequence spans 803 residues: Volume-regulated anion channel subunit LRRC8B (803 aa).

The Cytoplasmic segment spans residues 1–25 (MITLTELKCLADAQSSYHILKPWWD). The chain crosses the membrane as a helical span at residues 26–46 (VFWYYITLIMLLVAVLAGALQ). Residues 47 to 119 (LTQSRVLCCL…YEKQLHWFAK (73 aa)) lie on the Extracellular side of the membrane. Cystine bridges form between Cys-55–Cys-304 and Cys-109–Cys-289. A glycan (N-linked (GlcNAc...) asparagine) is linked at Asn-78. The chain crosses the membrane as a helical span at residues 120–140 (FFPYLVLLHTLIFAACSNFWL). Over 141–261 (HYPSTSSRLE…DIIYRVYLKQ (121 aa)) the chain is Cytoplasmic. 2 positions are modified to phosphoserine: Ser-186 and Ser-196. Residues 262-282 (IIVKVILFVLIITYVPYFLSY) traverse the membrane as a helical segment. Residues 283–307 (ITLEIDCSIDVQAFTGYKRYQCVYS) are Extracellular-facing. A helical transmembrane segment spans residues 308 to 328 (LAEIFKVLASFYVILVMLYGL). The Cytoplasmic portion of the chain corresponds to 329-803 (TSSYSLWWML…ERLQTCLDKC (475 aa)). LRR repeat units follow at residues 415–439 (VKNSQDKVELHLFMLNGLPDNVFEL), 440–462 (TEMEVLSLELIPEVKLPAAVAQL), 464–486 (NLRELHVYHSSLVVDHPALAFLE), 488–509 (NLRILRLKFTEMGKIPRWVFHL), 511–532 (NLKELYLSGCVLPEQLSSLHLE), 539–559 (NLRTLYLKSSLSRIPQVVTDL), 562–582 (SLQKLSLDNEGSKLVVLNNLK), 586–607 (NLKSLELLSCDLERIPHSIFSL), 609–630 (NLHELDLKENNLKTVEEIISFQ), 634–655 (SLSCLKLWHNNIAYIPAQIGAL), 657–678 (NLEQLFLGHNNIESLPLQLFLC), 680–701 (KLHYLDLSYNHLTFIPEEIQYL), 703–724 (NLQYFAVTNNNIEMLPDGLFQC), 726–747 (KLQCLLLGRNSLTDLSPLVGEL), and 749–771 (NLTHLELTGNYLETLPVELEGCQ).

The protein belongs to the LRRC8 family. Heterohexamer; oligomerizes with other LRRC8 proteins (LRRC8A, LRRC8C, LRRC8D and/or LRRC8E) to form a heterohexamer. In vivo, the subunit composition may depend primarily on expression levels, and heterooligomeric channels containing various proportions of the different LRRC8 proteins may coexist.

Its subcellular location is the cell membrane. It is found in the endoplasmic reticulum membrane. It catalyses the reaction chloride(in) = chloride(out). It carries out the reaction iodide(out) = iodide(in). The catalysed reaction is taurine(out) = taurine(in). Non-essential component of the volume-regulated anion channel (VRAC, also named VSOAC channel), an anion channel required to maintain a constant cell volume in response to extracellular or intracellular osmotic changes. The VRAC channel conducts iodide better than chloride and can also conduct organic osmolytes like taurine. Channel activity requires LRRC8A plus at least one other family member (LRRC8B, LRRC8C, LRRC8D or LRRC8E); channel characteristics depend on the precise subunit composition. This chain is Volume-regulated anion channel subunit LRRC8B, found in Mus musculus (Mouse).